Reading from the N-terminus, the 224-residue chain is GrpE protein homolog 2, mitochondrial (224 aa).

Residues 1–31 (MAARLLWAVRRRMQPLAAHAASEGRGWLHPF) constitute a mitochondrion transit peptide. Residue lysine 141 is modified to N6-acetyllysine.

This sequence belongs to the GrpE family. Probable component of the PAM complex at least composed of a mitochondrial HSP70 protein, GRPEL1 or GRPEL2, TIMM44, TIMM16/PAM16 and TIMM14/DNAJC19.

The protein resides in the mitochondrion matrix. Its function is as follows. Essential component of the PAM complex, a complex required for the translocation of transit peptide-containing proteins from the inner membrane into the mitochondrial matrix in an ATP-dependent manner. Seems to control the nucleotide-dependent binding of mitochondrial HSP70 to substrate proteins. Stimulates ATPase activity of mt-HSP70. May also serve to modulate the interconversion of oligomeric (inactive) and monomeric (active) forms of mt-HSP70. The polypeptide is GrpE protein homolog 2, mitochondrial (GRPEL2) (Bos taurus (Bovine)).